The sequence spans 573 residues: Excitatory amino acid transporter 2 (573 aa).

Residues M1–P11 are compositionally biased toward polar residues. Residues M1–K29 form a disordered region. Over M1 to N44 the chain is Cytoplasmic. A phosphoserine mark is found at S3, S21, S24, and S25. The span at V14–K29 shows a compositional bias: basic and acidic residues. C38 carries the S-palmitoyl cysteine lipid modification. A run of 3 helical transmembrane segments spans residues L45–L64, M88–L108, and M121–I142. N205 and N215 each carry an N-linked (GlcNAc...) asparagine glycan. 3 helical membrane-spanning segments follow: residues F235–M258, F268–I295, and I317–V338. The discontinuously helical intramembrane region spans F344 to L374. Position 361–363 (A361–S363) interacts with L-aspartate. Residues V384 to F410 traverse the membrane as a helical segment. Na(+) is bound by residues G392, T394, and N396. Residues T400, I441 to G445, D474, and N481 each bind L-aspartate. The discontinuously helical intramembrane region spans I424–G457. Residues W471 to V492 form a helical membrane-spanning segment. N481 and D485 together coordinate Na(+). Phosphoserine is present on residues S505, S520, S531, and S533. Position 538 is a phosphotyrosine (Y538). Phosphoserine occurs at positions 543, 559, and 563.

This sequence belongs to the dicarboxylate/amino acid:cation symporter (DAACS) (TC 2.A.23) family. SLC1A2 subfamily. Homotrimer. Interacts with AJUBA. Post-translationally, glycosylated. Palmitoylation at Cys-38 is not required for correct subcellular localization, but is important for glutamate uptake activity. Localized in brain and is highly enriched in the Purkinje cell layer in cerebellum.

It localises to the cell membrane. The enzyme catalyses K(+)(in) + L-glutamate(out) + 3 Na(+)(out) + H(+)(out) = K(+)(out) + L-glutamate(in) + 3 Na(+)(in) + H(+)(in). The catalysed reaction is D-aspartate(out) + K(+)(in) + 3 Na(+)(out) + H(+)(out) = D-aspartate(in) + K(+)(out) + 3 Na(+)(in) + H(+)(in). It carries out the reaction K(+)(in) + L-aspartate(out) + 3 Na(+)(out) + H(+)(out) = K(+)(out) + L-aspartate(in) + 3 Na(+)(in) + H(+)(in). Sodium-dependent, high-affinity amino acid transporter that mediates the uptake of L-glutamate and also L-aspartate and D-aspartate. Functions as a symporter that transports one amino acid molecule together with two or three Na(+) ions and one proton, in parallel with the counter-transport of one K(+) ion. Mediates Cl(-) flux that is not coupled to amino acid transport; this avoids the accumulation of negative charges due to aspartate and Na(+) symport. Essential for the rapid removal of released glutamate from the synaptic cleft, and for terminating the postsynaptic action of glutamate. The polypeptide is Excitatory amino acid transporter 2 (Slc1a2) (Rattus norvegicus (Rat)).